Here is a 540-residue protein sequence, read N- to C-terminus: Mitochondrial distribution and morphology protein 34 (540 aa).

Residues 1–208 (MSFKFNSGTF…LPSVIFNMSQ (208 aa)) form the SMP-LTD domain. Disordered stretches follow at residues 26–51 (ALNP…KKPK) and 379–399 (RSKS…SGSL). Residues 35 to 44 (PESTSGQDGS) are compositionally biased toward polar residues.

The protein belongs to the MDM34 family. In terms of assembly, component of the ER-mitochondria encounter structure (ERMES) or MDM complex, composed of MMM1, MDM10, MDM12 and MDM34.

It is found in the mitochondrion outer membrane. In terms of biological role, component of the ERMES/MDM complex, which serves as a molecular tether to connect the endoplasmic reticulum (ER) and mitochondria. Components of this complex are involved in the control of mitochondrial shape and protein biogenesis, and function in nonvesicular lipid trafficking between the ER and mitochondria. MDM34 is required for the interaction of the ER-resident membrane protein MMM1 and the outer mitochondrial membrane-resident beta-barrel protein MDM10. The sequence is that of Mitochondrial distribution and morphology protein 34 from Kluyveromyces lactis (strain ATCC 8585 / CBS 2359 / DSM 70799 / NBRC 1267 / NRRL Y-1140 / WM37) (Yeast).